The sequence spans 428 residues: Mitochondrial distribution and morphology protein 12 (428 aa).

Residues 1 to 387 (MSFDINWNQL…WPSWICIDMN (387 aa)) form the SMP-LTD domain. Disordered regions lie at residues 75–168 (VMNE…APPL) and 387–428 (NDDD…EAGE). The segment covering 81 to 96 (NDSKDEHLKNHGDGIN) has biased composition (basic and acidic residues). A compositionally biased stretch (acidic residues) spans 106–133 (LDDEDEDDEDDDEDDEDEEEEDEDDYDD). Residues 146 to 161 (LNFNENSTTPSANSFA) show a composition bias toward polar residues. Acidic residues predominate over residues 387–403 (NDDDDEEEEEEESEDND). Basic and acidic residues predominate over residues 412–428 (NDGKHGDGRTDETEAGE).

Belongs to the MDM12 family. As to quaternary structure, component of the ER-mitochondria encounter structure (ERMES) or MDM complex, composed of MMM1, MDM10, MDM12 and MDM34. An MMM1 homodimer associates with one molecule of MDM12 on each side in a pairwise head-to-tail manner, and the SMP-LTD domains of MMM1 and MDM12 generate a continuous hydrophobic tunnel for phospholipid trafficking.

The protein localises to the mitochondrion outer membrane. The protein resides in the endoplasmic reticulum membrane. Component of the ERMES/MDM complex, which serves as a molecular tether to connect the endoplasmic reticulum (ER) and mitochondria. Components of this complex are involved in the control of mitochondrial shape and protein biogenesis, and function in nonvesicular lipid trafficking between the ER and mitochondria. MDM12 is required for the interaction of the ER-resident membrane protein MMM1 and the outer mitochondrial membrane-resident beta-barrel protein MDM10. The MDM12-MMM1 subcomplex functions in the major beta-barrel assembly pathway that is responsible for biogenesis of all mitochondrial outer membrane beta-barrel proteins, and acts in a late step after the SAM complex. The MDM10-MDM12-MMM1 subcomplex further acts in the TOM40-specific pathway after the action of the MDM12-MMM1 complex. Essential for establishing and maintaining the structure of mitochondria and maintenance of mtDNA nucleoids. The polypeptide is Mitochondrial distribution and morphology protein 12 (Candida albicans (strain SC5314 / ATCC MYA-2876) (Yeast)).